The chain runs to 504 residues: Aspartyl/glutamyl-tRNA(Asn/Gln) amidotransferase subunit B (504 aa).

This sequence belongs to the GatB/GatE family. GatB subfamily. Heterotrimer of A, B and C subunits.

It carries out the reaction L-glutamyl-tRNA(Gln) + L-glutamine + ATP + H2O = L-glutaminyl-tRNA(Gln) + L-glutamate + ADP + phosphate + H(+). The enzyme catalyses L-aspartyl-tRNA(Asn) + L-glutamine + ATP + H2O = L-asparaginyl-tRNA(Asn) + L-glutamate + ADP + phosphate + 2 H(+). Allows the formation of correctly charged Asn-tRNA(Asn) or Gln-tRNA(Gln) through the transamidation of misacylated Asp-tRNA(Asn) or Glu-tRNA(Gln) in organisms which lack either or both of asparaginyl-tRNA or glutaminyl-tRNA synthetases. The reaction takes place in the presence of glutamine and ATP through an activated phospho-Asp-tRNA(Asn) or phospho-Glu-tRNA(Gln). This chain is Aspartyl/glutamyl-tRNA(Asn/Gln) amidotransferase subunit B, found in Tropheryma whipplei (strain TW08/27) (Whipple's bacillus).